The sequence spans 220 residues: Splicing factor U2AF 26 kDa subunit (220 aa).

Alanine 2 is modified (N-acetylalanine). Residues 12-40 form a C3H1-type 1 zinc finger; the sequence is EKDKVNCSFYFKIGACRHGDRCSRLHNKP. Residues 65 to 147 enclose the RRM domain; that stretch reads SHCHVSDVEV…QAVHAELSPV (83 aa). The C3H1-type 2 zinc-finger motif lies at 149 to 176; it reads DFRESCCRQYEMGECTRGGFCNFMHLRP. The disordered stretch occupies residues 186 to 220; sequence YGRGPRHRSPPRSHTGHRPRERNRRRSPDHRHGRF. Basic residues predominate over residues 189 to 220; the sequence is GPRHRSPPRSHTGHRPRERNRRRSPDHRHGRF.

Belongs to the splicing factor SR family. As to quaternary structure, interacts with GFI1, U2AF2 and C1QBP. Isoform 3 interacts with PER1. Isoform 3 is rapidly degraded by a proteasome-mediated degradation pathway. As to expression, ubiquitous. Highly expressed in the brain.

Its subcellular location is the nucleus. It localises to the nucleus speckle. It is found in the cytoplasm. RNA-binding protein that function as a pre-mRNA splicing factor. Plays a critical role in both constitutive and enhancer-dependent splicing by mediating protein-protein interactions and protein-RNA interactions required for accurate 3'-splice site selection. It can functionally substitute for U2AF1 in constitutive splicing and enhancer-dependent splicing. Acts by enhancing the binding of U2AF2 to weak pyrimidine tracts. Also participates in the regulation of alternative pre-mRNA splicing. Activates exon 5 skipping of PTPRC during T-cell activation; an event reversed by GFI1. Binds to RNA at the AG dinucleotide at the 3'-splice site. Shows a preference for AGC or AGA. Alternative splicing of U2AF1L4 may play a role in connecting the circadian rhythm to changing external cues: may provide a circadian buffering system in central and periphery clocks that allows synchronized adaption to clock-resetting stimuli in order to prevent potentially pathogenic desynchronization. This is Splicing factor U2AF 26 kDa subunit (U2af1l4) from Mus musculus (Mouse).